Consider the following 164-residue polypeptide: S-ribosylhomocysteine lyase (164 aa).

The Fe cation site is built by His-54, His-58, and Cys-128.

This sequence belongs to the LuxS family. In terms of assembly, homodimer. Fe cation serves as cofactor.

It catalyses the reaction S-(5-deoxy-D-ribos-5-yl)-L-homocysteine = (S)-4,5-dihydroxypentane-2,3-dione + L-homocysteine. Its function is as follows. Involved in the synthesis of autoinducer 2 (AI-2) which is secreted by bacteria and is used to communicate both the cell density and the metabolic potential of the environment. The regulation of gene expression in response to changes in cell density is called quorum sensing. Catalyzes the transformation of S-ribosylhomocysteine (RHC) to homocysteine (HC) and 4,5-dihydroxy-2,3-pentadione (DPD). The chain is S-ribosylhomocysteine lyase from Campylobacter jejuni subsp. jejuni serotype O:2 (strain ATCC 700819 / NCTC 11168).